Here is a 151-residue protein sequence, read N- to C-terminus: MDELPPEQIQLLKKAFDAFDREKKGCISTEMVGTILEMLGHRLDDDMLQEIIAEVDADGSGELEFEEFVSLASRFLVEEDAEAMQQELREAFRLYDKEGNGYITTNVLREILKELDDKITAEDLDMMIEEIDSDGSGTVDFDEFMEVMTGE.

EF-hand domains follow at residues 7–42 (EQIQLLKKAFDAFDREKKGCISTEMVGTILEMLGHR), 43–78 (LDDDMLQEIIAEVDADGSGELEFEEFVSLASRFLVE), 83–118 (AMQQELREAFRLYDKEGNGYITTNVLREILKELDDK), and 119–151 (ITAEDLDMMIEEIDSDGSGTVDFDEFMEVMTGE). Ca(2+) contacts are provided by Asp56, Asp58, Ser60, Glu62, and Glu67. Ca(2+)-binding residues include Asp132, Asp134, Ser136, Thr138, and Glu143.

It belongs to the troponin C family.

Its function is as follows. Troponin is the central regulatory protein of striated muscle contraction. It consists of three components: Troponin-I (Tn-I) which is the inhibitor of actomyosin ATPase, Troponin-T (Tn-T) which contains the binding site for tropomyosin and Troponin-C (Tn-C). The binding of calcium to Tn-C abolishes the inhibitory action of Tn on actin filaments. The protein is Troponin C, isoallergen Bla g 6.0101 of Blattella germanica (German cockroach).